The primary structure comprises 181 residues: MTNDRLAQDLKCIVKEWTDARILRENDIFVVGCSTSEVAGQPIGTAGSEEIASTIYQQLQSLQNATGINLAFQCCEHLNRAIVVERTIATTYSLPEVTAIPVREAGGAMAAYAYQHMIDPVVVEKITAEAGMDIGETMIGMHLKHVAVPLKFKQRFINYARVRAARTRPKLVGGSRAYYGK.

The protein belongs to the UPF0340 family.

This chain is UPF0340 protein OB2986, found in Oceanobacillus iheyensis (strain DSM 14371 / CIP 107618 / JCM 11309 / KCTC 3954 / HTE831).